Reading from the N-terminus, the 340-residue chain is MDENKIIDQLFSKEYTPQDDSEQAKNGDVSLYGLLDEVANGRRLMNCLFHSPMQMGNKLSTDKLDGKCRQIQRDWIDEEKTITMNSGALQLDGPVLFSWSHNVAPTSHQETINTTFKQGSPSRGSNKPKITTTSQLFDRASAEIDKCIKPNSKSWMVEERFERNEAHTADGKKPSTWANSDFKVDPLQKFVVKELPKEKKKSDGDKTKKNKSKRKSFFGFWGHSGSKSGSKKKSEKPIEAKNEIQDEVSQKSGLSPDDDTTFSDKNTIQSKQESMSDQQAEPKVHEPAVTNTGCSEHDDGDGFEQVPAQSSYHPSSEPSIASTPSLTLDSFIPLQPKKKI.

The span at 193–207 shows a compositional bias: basic and acidic residues; it reads KELPKEKKKSDGDKT. Positions 193–340 are disordered; the sequence is KELPKEKKKS…FIPLQPKKKI (148 aa). Low complexity predominate over residues 217–228; it reads FFGFWGHSGSKS. Residues 235–244 show a composition bias toward basic and acidic residues; the sequence is EKPIEAKNEI. Polar residues-rich tracts occupy residues 263–279 and 307–328; these read SDKN…SDQQ and PAQS…SLTL.

This is an uncharacterized protein from Saccharomyces cerevisiae (strain ATCC 204508 / S288c) (Baker's yeast).